The sequence spans 490 residues: Serine/threonine-protein kinase BSK6 (490 aa).

Residue Gly2 is the site of N-myristoyl glycine attachment. Ser25 bears the Phosphoserine mark. Residues Asp56–Leu310 enclose the Protein kinase domain. ATP contacts are provided by residues His62 to Val70 and Lys84. The Proton acceptor role is filled by Asp178. The residue at position 373 (Ser373) is a Phosphoserine.

The protein belongs to the protein kinase superfamily. Ser/Thr protein kinase family. Interacts with BRI1, ASK7/BIN2, ASK9/BIL2, BSK1, BSK5, BSK8 and BSK11. In terms of processing, phosphorylated by BRI1, ASK7/BIN2 and ASK9/BIL2.

It localises to the cell membrane. The catalysed reaction is L-seryl-[protein] + ATP = O-phospho-L-seryl-[protein] + ADP + H(+). It catalyses the reaction L-threonyl-[protein] + ATP = O-phospho-L-threonyl-[protein] + ADP + H(+). Probable serine/threonine kinase that acts as a positive regulator of brassinosteroid (BR) signaling downstream of the receptor kinase BRI1. Functions redundantly with BSK3, BSK4, BSK7 and BSK8. The chain is Serine/threonine-protein kinase BSK6 from Arabidopsis thaliana (Mouse-ear cress).